The sequence spans 375 residues: MAKSDYYEILGISKNADEREIKKSYKRLAMKFHPDRNPGNTTAETKFKEIKEAYEVLSNSEKRAAYDQYGHAAFESGSMGATSNSGGADFSDIFGDVFGDIFGGNRRSRAGRGSDLRYNIELSLEDAVRGIIKEICIPTLSTCEKCRGTGARSNAAIITCMTCHGQGQVQIRQGFFSVQQSCPTCHGHGKIIKEACNKCHGNGRVERSKTLSVKIPSGVNTGDRIRLSGEGESGKNGAPSGDLYVQIQIRKHPIFDREEKNLYCEVPISFSMAALGGEIEVPTLDGRVKLKIPPETQTGKLFRMRGKGVKSVRSGGNGDLLCRVVVETPVKLNDIQKRLLQDLSDSFEGPHGNRNSPRSKSFFDGVKKFFDDLTR.

Residues 5–70 (DYYEILGISK…EKRAAYDQYG (66 aa)) enclose the J domain. The CR-type zinc-finger motif lies at 130-208 (GIIKEICIPT…CHGNGRVERS (79 aa)). Zn(2+) is bound by residues Cys143, Cys146, Cys160, Cys163, Cys182, Cys185, Cys196, and Cys199. 4 CXXCXGXG motif repeats span residues 143–150 (CEKCRGTG), 160–167 (CMTCHGQG), 182–189 (CPTCHGHG), and 196–203 (CNKCHGNG).

This sequence belongs to the DnaJ family. Homodimer. Zn(2+) is required as a cofactor.

The protein localises to the cytoplasm. Functionally, participates actively in the response to hyperosmotic and heat shock by preventing the aggregation of stress-denatured proteins and by disaggregating proteins, also in an autonomous, DnaK-independent fashion. Unfolded proteins bind initially to DnaJ; upon interaction with the DnaJ-bound protein, DnaK hydrolyzes its bound ATP, resulting in the formation of a stable complex. GrpE releases ADP from DnaK; ATP binding to DnaK triggers the release of the substrate protein, thus completing the reaction cycle. Several rounds of ATP-dependent interactions between DnaJ, DnaK and GrpE are required for fully efficient folding. Also involved, together with DnaK and GrpE, in the DNA replication of plasmids through activation of initiation proteins. In Blochmanniella pennsylvanica (strain BPEN), this protein is Chaperone protein DnaJ.